The primary structure comprises 86 residues: Cytochrome c oxidase subunit 6B1 (86 aa).

Ala2 carries the post-translational modification N-acetylalanine. The region spanning 27 to 73 is the CHCH domain; the sequence is TRNCWQNYLDFHRCQKAMTAKGGDISVCEWYQRVYQSLCPTSWVTDW. The Cx9C motif signature appears at 30–40; it reads CWQNYLDFHRC. 2 disulfide bridges follow: Cys30–Cys65 and Cys40–Cys54. Residues 54–65 carry the Cx10C motif motif; it reads CEWYQRVYQSLC.

The protein belongs to the cytochrome c oxidase subunit 6B family. As to quaternary structure, component of the cytochrome c oxidase (complex IV, CIV), a multisubunit enzyme composed of 14 subunits. The complex is composed of a catalytic core of 3 subunits MT-CO1, MT-CO2 and MT-CO3, encoded in the mitochondrial DNA, and 11 supernumerary subunits COX4I1 (or COX4I2), COX5A, COX5B, COX6A1 (or COX6A2), COX6B1 (or COX6B2), COX6C, COX7A2 (or COX7A1), COX7B, COX7C, COX8A and NDUFA4, which are encoded in the nuclear genome. The complex exists as a monomer or a dimer and forms supercomplexes (SCs) in the inner mitochondrial membrane with NADH-ubiquinone oxidoreductase (complex I, CI) and ubiquinol-cytochrome c oxidoreductase (cytochrome b-c1 complex, complex III, CIII), resulting in different assemblies (supercomplex SCI(1)III(2)IV(1) and megacomplex MCI(2)III(2)IV(2)).

The protein resides in the mitochondrion inner membrane. The protein operates within energy metabolism; oxidative phosphorylation. In terms of biological role, component of the cytochrome c oxidase, the last enzyme in the mitochondrial electron transport chain which drives oxidative phosphorylation. The respiratory chain contains 3 multisubunit complexes succinate dehydrogenase (complex II, CII), ubiquinol-cytochrome c oxidoreductase (cytochrome b-c1 complex, complex III, CIII) and cytochrome c oxidase (complex IV, CIV), that cooperate to transfer electrons derived from NADH and succinate to molecular oxygen, creating an electrochemical gradient over the inner membrane that drives transmembrane transport and the ATP synthase. Cytochrome c oxidase is the component of the respiratory chain that catalyzes the reduction of oxygen to water. Electrons originating from reduced cytochrome c in the intermembrane space (IMS) are transferred via the dinuclear copper A center (CU(A)) of subunit 2 and heme A of subunit 1 to the active site in subunit 1, a binuclear center (BNC) formed by heme A3 and copper B (CU(B)). The BNC reduces molecular oxygen to 2 water molecules using 4 electrons from cytochrome c in the IMS and 4 protons from the mitochondrial matrix. The sequence is that of Cytochrome c oxidase subunit 6B1 (COX6B1) from Homo sapiens (Human).